Here is a 324-residue protein sequence, read N- to C-terminus: NAD(P)H-dependent D-xylose reductase XYR1 (324 aa).

The Proton donor role is filled by tyrosine 50. Histidine 112 contacts substrate. Residues 168-169, 217-226, and 273-283 contribute to the NAD(+) site; these read SN, SSFGPASFKE, and KSSREKTMKSN.

This sequence belongs to the aldo/keto reductase family.

It carries out the reaction xylitol + NAD(+) = D-xylose + NADH + H(+). It catalyses the reaction xylitol + NADP(+) = D-xylose + NADPH + H(+). It participates in carbohydrate metabolism; D-xylose degradation. Functionally, catalyzes the initial reaction in the xylose utilization pathway by reducing D-xylose into xylitol. Xylose is a major component of hemicelluloses such as xylan. Most fungi utilize D-xylose via three enzymatic reactions, xylose reductase (XR), xylitol dehydrogenase (XDH), and xylulokinase, to form xylulose 5-phosphate, which enters pentose phosphate pathway. In Pyricularia oryzae (strain 70-15 / ATCC MYA-4617 / FGSC 8958) (Rice blast fungus), this protein is NAD(P)H-dependent D-xylose reductase XYR1 (XYR1).